The sequence spans 99 residues: Aspartyl/glutamyl-tRNA(Asn/Gln) amidotransferase subunit C (99 aa).

It belongs to the GatC family. Heterotrimer of A, B and C subunits.

The catalysed reaction is L-glutamyl-tRNA(Gln) + L-glutamine + ATP + H2O = L-glutaminyl-tRNA(Gln) + L-glutamate + ADP + phosphate + H(+). It carries out the reaction L-aspartyl-tRNA(Asn) + L-glutamine + ATP + H2O = L-asparaginyl-tRNA(Asn) + L-glutamate + ADP + phosphate + 2 H(+). Functionally, allows the formation of correctly charged Asn-tRNA(Asn) or Gln-tRNA(Gln) through the transamidation of misacylated Asp-tRNA(Asn) or Glu-tRNA(Gln) in organisms which lack either or both of asparaginyl-tRNA or glutaminyl-tRNA synthetases. The reaction takes place in the presence of glutamine and ATP through an activated phospho-Asp-tRNA(Asn) or phospho-Glu-tRNA(Gln). The polypeptide is Aspartyl/glutamyl-tRNA(Asn/Gln) amidotransferase subunit C (Paraburkholderia phytofirmans (strain DSM 17436 / LMG 22146 / PsJN) (Burkholderia phytofirmans)).